Consider the following 1220-residue polypeptide: Polycomb protein Sfmbt (1220 aa).

The FCS-type zinc-finger motif lies at 322 to 357 (PIQKDGMAVCKRCGAIGVKHTFYTKSRRFCSMACAR). Zn(2+) contacts are provided by C331, C334, C351, and C355. Disordered stretches follow at residues 371–399 (GDQA…QSQS) and 464–483 (DATA…SYLS). Over residues 473–482 (EGASTPNSYL) the composition is skewed to polar residues. MBT repeat units follow at residues 536 to 647 (YDWL…LIPP), 655 to 753 (KDWK…LAAP), 761 to 871 (LAGR…VTPP), and 879 to 975 (FTWE…LEGP). Disordered regions lie at residues 976–1024 (PRVA…IALK) and 1050–1092 (NNQP…AGSG). Basic residues predominate over residues 991 to 1000 (KIQRKRKPKK). Residues 1052 to 1068 (QPEEEGDEEDPDADGDG) are compositionally biased toward acidic residues. Residues 1071–1082 (STSHISEQSTTQ) show a composition bias toward polar residues. The span at 1083-1092 (SSSDLIAGSG) shows a compositional bias: low complexity. One can recognise an SAM domain in the interval 1140 to 1203 (WNVYDVSQFL…SDLIAQLKCK (64 aa)).

Interacts with pho as a component of the pho-repressive complex (PhoRC).

The protein localises to the nucleus. Its function is as follows. Polycomb group (PcG) protein that binds to the Polycomb response elements (PREs) found in the regulatory regions of many genes. PcG proteins act by forming multiprotein complexes, which are required to maintain the transcriptionally repressive state of homeotic genes throughout development. PcG proteins are not required to initiate repression, but to maintain it during later stages of development. They probably act via the methylation of histones, rendering chromatin heritably changed in its expressibility. Necessary but not sufficient to recruit a functional PcG repressive complex that represses target genes, suggesting that the recruitment of the distinct PRC1 complex is also required to allow a subsequent repression. The protein is Polycomb protein Sfmbt of Drosophila melanogaster (Fruit fly).